We begin with the raw amino-acid sequence, 185 residues long: Ribosome-recycling factor (185 aa).

The protein belongs to the RRF family.

It is found in the cytoplasm. Functionally, responsible for the release of ribosomes from messenger RNA at the termination of protein biosynthesis. May increase the efficiency of translation by recycling ribosomes from one round of translation to another. This Shewanella sediminis (strain HAW-EB3) protein is Ribosome-recycling factor.